The following is a 168-amino-acid chain: Peptidoglycan-associated lipoprotein (168 aa).

The signal sequence occupies residues 1-24; the sequence is MGRIAALTRNPVMIALVAMLAIAG. Cysteine 25 carries the N-palmitoyl cysteine lipid modification. Residue cysteine 25 is the site of S-diacylglycerol cysteine attachment. Residues 50 to 167 enclose the OmpA-like domain; it reads AQDFTVNIGD…RAVTTLSGAG (118 aa).

Belongs to the Pal lipoprotein family. The Tol-Pal system is composed of five core proteins: the inner membrane proteins TolA, TolQ and TolR, the periplasmic protein TolB and the outer membrane protein Pal. They form a network linking the inner and outer membranes and the peptidoglycan layer.

It is found in the cell outer membrane. Functionally, part of the Tol-Pal system, which plays a role in outer membrane invagination during cell division and is important for maintaining outer membrane integrity. This is Peptidoglycan-associated lipoprotein from Mesorhizobium japonicum (strain LMG 29417 / CECT 9101 / MAFF 303099) (Mesorhizobium loti (strain MAFF 303099)).